The primary structure comprises 382 residues: Mannitol-1-phosphate 5-dehydrogenase (382 aa).

3 to 14 contacts NAD(+); sequence ALHFGAGNIGRG. K269 is subject to N6-acetyllysine.

It belongs to the mannitol dehydrogenase family.

It catalyses the reaction D-mannitol 1-phosphate + NAD(+) = beta-D-fructose 6-phosphate + NADH + H(+). The polypeptide is Mannitol-1-phosphate 5-dehydrogenase (Escherichia coli (strain ATCC 8739 / DSM 1576 / NBRC 3972 / NCIMB 8545 / WDCM 00012 / Crooks)).